Here is a 472-residue protein sequence, read N- to C-terminus: MSLSRRRFIQASGLALCAGGLPLQARASGAQAVLPVPPLLESRRGQPLFLSLERTHWAFMGGRKVGTWGVNGVYLGPTVRVHSGDDVKLIYSNRLSESVAMEVAGLLVPGPLAGGPARQMSPGVDWSPVLPIRQAAATLWYHADTPRHMAPQVYSGLAGLWLVEDQYSKNAPLPNHYGVDDFPLILQDKRLDNFGVPEYDPPSSGGFLGDTLLVNGVQDPYVEVSRGWVRLRLLNASNARRYLLQLSDGRPFFVIASDQGLLPAPLQADTLPLAPGERREVLIDMSKGEEISITAGEAAGIMDRLRGLFEPSSMLVSTRVLTLRPTGLLPLMTDTLPARLAADPLPEGDVVNNRSIMLGSASSPGINGALWDPGRIDVQARQGTWERWTVRADTPQSFYIQGAQFLVKSVNNAPPLVEDRGWKDSVWVDGEVSLLVYFPQPSSEHFPFLFYSGTLELADRGSVGQMVVQPAQ.

The segment at residues 1 to 32 (MSLSRRRFIQASGLALCAGGLPLQARASGAQA) is a signal peptide (tat-type signal).

It belongs to the FtsP family. Post-translationally, predicted to be exported by the Tat system. The position of the signal peptide cleavage has not been experimentally proven.

Its subcellular location is the periplasm. In terms of biological role, cell division protein that is required for growth during stress conditions. May be involved in protecting or stabilizing the divisomal assembly under conditions of stress. In Edwardsiella tarda (strain FL6-60), this protein is Cell division protein FtsP.